Here is a 545-residue protein sequence, read N- to C-terminus: ATP synthase subunit alpha (545 aa).

173 to 180 (GDRQTGKT) is an ATP binding site.

Belongs to the ATPase alpha/beta chains family. In terms of assembly, F-type ATPases have 2 components, CF(1) - the catalytic core - and CF(0) - the membrane proton channel. CF(1) has five subunits: alpha(3), beta(3), gamma(1), delta(1), epsilon(1). CF(0) has three main subunits: a(1), b(2) and c(9-12). The alpha and beta chains form an alternating ring which encloses part of the gamma chain. CF(1) is attached to CF(0) by a central stalk formed by the gamma and epsilon chains, while a peripheral stalk is formed by the delta and b chains.

Its subcellular location is the cell membrane. The enzyme catalyses ATP + H2O + 4 H(+)(in) = ADP + phosphate + 5 H(+)(out). In terms of biological role, produces ATP from ADP in the presence of a proton gradient across the membrane. The alpha chain is a regulatory subunit. This is ATP synthase subunit alpha from Clavibacter sepedonicus (Clavibacter michiganensis subsp. sepedonicus).